The chain runs to 1501 residues: Protein SNQ2 (1501 aa).

The segment covering 1 to 17 has biased composition (polar residues); the sequence is MSNIKSTQDSSHNAVAR. The tract at residues 1-56 is disordered; sequence MSNIKSTQDSSHNAVARSSSASFAASEESFTGITHDKDEQSDTPADKLTKMLTGPA. At Ser-2 the chain carries N-acetylserine. Low complexity predominate over residues 18–30; that stretch reads SSSASFAASEESF. 2 positions are modified to phosphoserine: Ser-26 and Ser-29. The span at 34–49 shows a compositional bias: basic and acidic residues; the sequence is THDKDEQSDTPADKLT. Phosphoserine is present on residues Ser-64, Ser-80, and Ser-86. An ABC transporter 1 domain is found at 161 to 410; the sequence is FKGIKAKRHQ…FAKMGYLCPP (250 aa). Asn-273, Asn-334, and Asn-518 each carry an N-linked (GlcNAc...) asparagine glycan. 5 helical membrane passes run 521-541, 554-574, 600-620, 628-648, and 664-680; these read YTVINVCSAIIQSFITGSLFY, GGVLYFALLYYSLMGLANISF, LASFPFRMIGLTCFFIILFFL, GSFFTIYLFLTMCSEAINGLF, and ISGILMMSISMYSTYMI. Asn-730 carries an N-linked (GlcNAc...) asparagine glycan. A helical transmembrane segment spans residues 771 to 789; it reads FGILWCFLLGYVVLKVIFT. Positions 853-1095 constitute an ABC transporter 2 domain; it reads FIWKDVCFTI…ILNYFERNGA (243 aa). Residue Asn-874 is glycosylated (N-linked (GlcNAc...) asparagine). 889–896 is a binding site for ATP; sequence GESGAGKT. The residue at position 1153 (Thr-1153) is a Phosphothreonine. Helical transmembrane passes span 1190 to 1212, 1216 to 1236, 1277 to 1296, and 1333 to 1352; these read IMSKMMLMLVGGLYIGFTFFNVG, VGLQNAMFAAFISIILSAPAM, HLFFSTIFFVSSYFPLRIFF, and ANVILGLCLSFMLSFCGVTQ. Asn-1401 carries an N-linked (GlcNAc...) asparagine glycan. Residues 1455-1475 traverse the membrane as a helical segment; the sequence is FGIFWIYIFFNIIAMVCVYYL.

Belongs to the ABC transporter superfamily. ABCG family. PDR (TC 3.A.1.205) subfamily.

The protein localises to the membrane. Could be an ATP-dependent permease. Confers hyper-resistance to the mutagens 4-nitroquinoline-N-oxide (4-NQO) and triaziquone, as well as to the chemicals sulphomethuron methyl phenanthroline when present in multiple copies. Exhibits nucleoside triphosphatase activity. This is Protein SNQ2 (SNQ2) from Saccharomyces cerevisiae (strain ATCC 204508 / S288c) (Baker's yeast).